A 70-amino-acid polypeptide reads, in one-letter code: U2-agatoxin-Ao1l (70 aa).

Residues 1 to 20 (MRAIISLLLISAMVFSIIEA) form the signal peptide. Positions 21–34 (VPEEEGLQLSEDER) are excised as a propeptide. 3 disulfide bridges follow: Cys37–Cys53, Cys44–Cys58, and Cys52–Cys68. Position 69 is a leucine amide (Leu69).

The protein belongs to the neurotoxin 01 (U2-agtx) family. In terms of tissue distribution, expressed by the venom gland.

It is found in the secreted. In terms of biological role, insect active toxin causing rapid but reversible paralysis in crickets. No activity shown in mammals. Does not show effect on mammalian voltage-gated calcium channels. This is U2-agatoxin-Ao1l from Agelena orientalis (Funnel-web spider).